We begin with the raw amino-acid sequence, 394 residues long: 1-deoxy-D-xylulose 5-phosphate reductoisomerase (394 aa).

Residues threonine 10, glycine 11, serine 12, isoleucine 13, glycine 38, arginine 39, asparagine 40, and asparagine 123 each contribute to the NADPH site. Lysine 124 serves as a coordination point for 1-deoxy-D-xylulose 5-phosphate. Glutamate 125 contacts NADPH. Residue aspartate 149 participates in Mn(2+) binding. 1-deoxy-D-xylulose 5-phosphate-binding residues include serine 150, glutamate 151, serine 175, and histidine 198. Residue glutamate 151 participates in Mn(2+) binding. Glycine 204 is a binding site for NADPH. The 1-deoxy-D-xylulose 5-phosphate site is built by serine 211, asparagine 216, lysine 217, and glutamate 220. Glutamate 220 contacts Mn(2+).

This sequence belongs to the DXR family. The cofactor is Mg(2+). It depends on Mn(2+) as a cofactor.

It carries out the reaction 2-C-methyl-D-erythritol 4-phosphate + NADP(+) = 1-deoxy-D-xylulose 5-phosphate + NADPH + H(+). It functions in the pathway isoprenoid biosynthesis; isopentenyl diphosphate biosynthesis via DXP pathway; isopentenyl diphosphate from 1-deoxy-D-xylulose 5-phosphate: step 1/6. Catalyzes the NADPH-dependent rearrangement and reduction of 1-deoxy-D-xylulose-5-phosphate (DXP) to 2-C-methyl-D-erythritol 4-phosphate (MEP). The chain is 1-deoxy-D-xylulose 5-phosphate reductoisomerase from Cereibacter sphaeroides (strain ATCC 17023 / DSM 158 / JCM 6121 / CCUG 31486 / LMG 2827 / NBRC 12203 / NCIMB 8253 / ATH 2.4.1.) (Rhodobacter sphaeroides).